We begin with the raw amino-acid sequence, 357 residues long: Holliday junction branch migration complex subunit RuvB (357 aa).

A disordered region spans residues M1–I20. Residues M1 to Y185 form a large ATPase domain (RuvB-L) region. ATP contacts are provided by residues L24, R25, G66, K69, T70, S71, E132–F134, R175, Y185, and R222. T70 is a Mg(2+) binding site. A small ATPAse domain (RuvB-S) region spans residues E186–D256. The head domain (RuvB-H) stretch occupies residues T259–D357. DNA contacts are provided by R314 and R319.

It belongs to the RuvB family. In terms of assembly, homohexamer. Forms an RuvA(8)-RuvB(12)-Holliday junction (HJ) complex. HJ DNA is sandwiched between 2 RuvA tetramers; dsDNA enters through RuvA and exits via RuvB. An RuvB hexamer assembles on each DNA strand where it exits the tetramer. Each RuvB hexamer is contacted by two RuvA subunits (via domain III) on 2 adjacent RuvB subunits; this complex drives branch migration. In the full resolvosome a probable DNA-RuvA(4)-RuvB(12)-RuvC(2) complex forms which resolves the HJ.

It is found in the cytoplasm. It carries out the reaction ATP + H2O = ADP + phosphate + H(+). In terms of biological role, the RuvA-RuvB-RuvC complex processes Holliday junction (HJ) DNA during genetic recombination and DNA repair, while the RuvA-RuvB complex plays an important role in the rescue of blocked DNA replication forks via replication fork reversal (RFR). RuvA specifically binds to HJ cruciform DNA, conferring on it an open structure. The RuvB hexamer acts as an ATP-dependent pump, pulling dsDNA into and through the RuvAB complex. RuvB forms 2 homohexamers on either side of HJ DNA bound by 1 or 2 RuvA tetramers; 4 subunits per hexamer contact DNA at a time. Coordinated motions by a converter formed by DNA-disengaged RuvB subunits stimulates ATP hydrolysis and nucleotide exchange. Immobilization of the converter enables RuvB to convert the ATP-contained energy into a lever motion, pulling 2 nucleotides of DNA out of the RuvA tetramer per ATP hydrolyzed, thus driving DNA branch migration. The RuvB motors rotate together with the DNA substrate, which together with the progressing nucleotide cycle form the mechanistic basis for DNA recombination by continuous HJ branch migration. Branch migration allows RuvC to scan DNA until it finds its consensus sequence, where it cleaves and resolves cruciform DNA. The protein is Holliday junction branch migration complex subunit RuvB of Nocardia farcinica (strain IFM 10152).